A 194-amino-acid chain; its full sequence is 5'-deoxynucleotidase PBPRA2627 (194 aa).

Residues 18-19 (RW) and His33 contribute to the substrate site. In terms of domain architecture, HD spans 30 to 142 (ISEHSLQVAF…VKQADSLCAY (113 aa)). Residues His33, His68, and Asp69 each contribute to the a divalent metal cation site. Residues Asp69, 77–80 (DMPT), and Asp137 contribute to the substrate site. Position 137 (Asp137) interacts with a divalent metal cation.

The protein belongs to the 5DNU family. As to quaternary structure, homodimer. The cofactor is a divalent metal cation.

The protein localises to the cytoplasm. The enzyme catalyses a 2'-deoxyribonucleoside 5'-phosphate + H2O = a 2'-deoxyribonucleoside + phosphate. Functionally, catalyzes the strictly specific dephosphorylation of 2'-deoxyribonucleoside 5'-monophosphates. This Photobacterium profundum (strain SS9) protein is 5'-deoxynucleotidase PBPRA2627.